The following is a 3739-amino-acid chain: Pikromycin polyketide synthase component PikAII (3739 aa).

Residues Gly-35–Glu-463 enclose the Ketosynthase family 3 (KS3) 1 domain. Module regions lie at residues Val-38 to Leu-1517 and Val-1542 to Leu-3642. Cys-208 serves as the catalytic Acyl-thioester intermediate; for beta-ketoacyl synthase 1 activity. Catalysis depends on for beta-ketoacyl synthase 1 activity residues His-343 and His-383. The segment at Phe-572–Ala-877 is acyltransferase 1. Ser-662 acts as the Acyl-ester intermediate; for acyltransferase 1 activity in catalysis. Residues Gly-1150–Glu-1343 form a C2-type beta-ketoacyl reductase 1 region. Residue Tyr-1313 is the For C2-type beta-ketoacyl reductase 1 and probable racemase activities of the active site. Residues Arg-1445–Ile-1520 form the Carrier 1 domain. Ser-1480 is modified (O-(pantetheine 4'-phosphoryl)serine). The 429-residue stretch at Asp-1539 to Glu-1967 folds into the Ketosynthase family 3 (KS3) 2 domain. The active-site Acyl-thioester intermediate; for beta-ketoacyl synthase 2 activity is the Cys-1712. Residues His-1847 and His-1887 each act as for beta-ketoacyl synthase 2 activity in the active site. Residues Phe-2069–Ala-2374 form an acyltransferase 2 region. The active-site Acyl-ester intermediate; for acyltransferase 2 activity is the Ser-2159. Residues His-2428–Thr-2553 form an N-terminal hotdog fold region. Residues His-2428–Gln-2703 are dehydratase. The PKS/mFAS DH domain occupies His-2428–Ala-2705. His-2460 acts as the Proton acceptor; for dehydratase activity in catalysis. The segment at Ala-2567–Ala-2705 is C-terminal hotdog fold. The Proton donor; for dehydratase activity role is filled by Asp-2629. Positions Gly-2959–Leu-3267 are enoyl reductase. Tyr-3005 functions as the For enoyl reductase activity in the catalytic mechanism. NADP(+)-binding positions include Leu-3092 to Ala-3109, Thr-3285 to Leu-3288, Ser-3309 to Gly-3312, Asp-3338 to Val-3339, Lys-3388, and Phe-3412 to Ser-3413. The segment at Gly-3277–Glu-3458 is beta-ketoacyl reductase 2. Tyr-3427 functions as the For beta-ketoacyl reductase 2 activity in the catalytic mechanism. Positions Ala-3570–Leu-3645 constitute a Carrier 2 domain. Ser-3605 is modified (O-(pantetheine 4'-phosphoryl)serine).

In terms of assembly, homodimer. Pikromycin PKS consists of a combination of multimodular (PikAI and PikAII) and monomodular (PikAIII and PikAIV) polypeptides each coding for a functional synthase subunit which participates in 1 (monomodular) or 2 (multimodular) of the six FAS-like elongation steps required for formation of the polyketide. Module 1, 2, 3, 4, 5, and 6 participating in biosynthesis steps 1, 2, 3, 4, 5, and 6, respectively. Pantetheine 4'-phosphate serves as cofactor.

It carries out the reaction 5 (S)-methylmalonyl-CoA + malonyl-CoA + 5 NADPH + 11 H(+) = 10-deoxymethynolide + 6 CO2 + 5 NADP(+) + 6 CoA + 2 H2O. It catalyses the reaction 6 (S)-methylmalonyl-CoA + malonyl-CoA + 5 NADPH + 12 H(+) = narbonolide + 7 CO2 + 5 NADP(+) + 7 CoA + 2 H2O. The protein operates within antibiotic biosynthesis. Involved in the biosynthesis of 12- and 14-membered ring macrolactone antibiotics such as methymycin/neomethymycin and pikromycin/narbomycin, respectively. Component of the pikromycin PKS which catalyzes the biosynthesis of both precursors 10-deoxymethynolide (12-membered ring macrolactone) and narbonolide (14-membered ring macrolactone). Chain elongation through PikAI, PikAII and PikAIII followed by thioesterase catalyzed termination results in the production of 10-deoxymethynolide, while continued elongation through PikAIV, followed by thioesterase (TE) catalyzed cyclization results in the biosynthesis of the narbonolide. The polypeptide is Pikromycin polyketide synthase component PikAII (Streptomyces venezuelae).